A 637-amino-acid polypeptide reads, in one-letter code: Multicopper oxidase LPR1 homolog 5 (637 aa).

The signal sequence occupies residues 1–21 (MSPRIQQLAAVLLAAVVVVAA). The N-linked (GlcNAc...) asparagine glycan is linked to N100. Residues H209 and H211 each coordinate Cu cation. Residue N234 is glycosylated (N-linked (GlcNAc...) asparagine). Positions 257 and 259 each coordinate Cu cation. N-linked (GlcNAc...) asparagine glycosylation is found at N308, N349, N357, N425, N482, and N516. In terms of domain architecture, Plastocyanin-like spans 334 to 406 (PYLSVQRRRY…IVDFSRLPAA (73 aa)). Cu cation-binding residues include H522, H525, and H527. An N-linked (GlcNAc...) asparagine glycan is attached at N553. Positions 618, 619, 620, 624, and 629 each coordinate Cu cation.

The protein belongs to the multicopper oxidase family. Cu cation is required as a cofactor. Highly expressed in roots and basal stems.

It localises to the endoplasmic reticulum membrane. Functionally, multicopper oxidase that may play a role in the maintenance of inorganic phosphate homeostasis. This chain is Multicopper oxidase LPR1 homolog 5, found in Oryza sativa subsp. japonica (Rice).